Reading from the N-terminus, the 395-residue chain is Elongation factor Tu (395 aa).

Positions 10 to 204 (KPHCNIGTIG…TVDSYIPDPQ (195 aa)) constitute a tr-type G domain. The segment at 19–26 (GHVDHGKT) is G1. 19 to 26 (GHVDHGKT) is a binding site for GTP. Residue T26 participates in Mg(2+) binding. The G2 stretch occupies residues 61–65 (GITIS). Residues 82 to 85 (DCPG) form a G3 region. GTP-binding positions include 82–86 (DCPGH) and 137–140 (NKCD). The interval 137 to 140 (NKCD) is G4. Residues 173–175 (SAL) are G5.

This sequence belongs to the TRAFAC class translation factor GTPase superfamily. Classic translation factor GTPase family. EF-Tu/EF-1A subfamily. In terms of assembly, monomer.

The protein resides in the cytoplasm. The catalysed reaction is GTP + H2O = GDP + phosphate + H(+). Its function is as follows. GTP hydrolase that promotes the GTP-dependent binding of aminoacyl-tRNA to the A-site of ribosomes during protein biosynthesis. The polypeptide is Elongation factor Tu (Agathobacter rectalis (strain ATCC 33656 / DSM 3377 / JCM 17463 / KCTC 5835 / VPI 0990) (Eubacterium rectale)).